A 74-amino-acid chain; its full sequence is MAAKFHLCLLLIILGTITVQGARHPGKPHFFRRQPGSDCASINGRCVPPNERCPNGECHLQSCPGYQEKCCCPV.

An N-terminal signal peptide occupies residues 1-21 (MAAKFHLCLLLIILGTITVQG). Positions 22–31 (ARHPGKPHFF) are excised as a propeptide.

This sequence belongs to the Cnidaria small cysteine-rich protein (SCRiP) family. beta subfamily. Contains 4 disulfide bonds.

Its subcellular location is the secreted. The protein localises to the nematocyst. Functionally, induces neurotoxic symptoms on zebrafish. Has also been claimed to be implied in calcification, but tests on homolog proteins suggest that proteins of this family have a neurotoxic function and not a calcification function. This Orbicella faveolata (Mountainous star coral) protein is Small cysteine-rich protein 8.